Reading from the N-terminus, the 1073-residue chain is Carbamoyl phosphate synthase large chain (1073 aa).

Residues 1–402 (MPRRIDVRKV…ALQKAIRMLD (402 aa)) form a carboxyphosphate synthetic domain region. ATP is bound by residues R129, R169, G175, G176, K208, L210, E215, G241, V242, H243, Q284, and E299. Residues 133–328 (RETMMKAGLP…LAYIAAKLAL (196 aa)) form the ATP-grasp 1 domain. Residues Q284, E299, and N301 each contribute to the Mg(2+) site. 3 residues coordinate Mn(2+): Q284, E299, and N301. The segment at 403 to 555 (IGEPGVVAGP…MSYNAYEDDE (153 aa)) is oligomerization domain. The carbamoyl phosphate synthetic domain stretch occupies residues 556–944 (PITTGRPRLI…LKSWLSVQGN (389 aa)). Residues 681 to 871 (SQLLEELGIK…LMRAAAEAAL (191 aa)) enclose the ATP-grasp 2 domain. Residues R717, K756, L758, E763, G787, V788, H789, S790, Q830, and E842 each contribute to the ATP site. Residues Q830, E842, and N844 each contribute to the Mg(2+) site. Residues Q830, E842, and N844 each coordinate Mn(2+). The MGS-like domain maps to 944 to 1073 (NRIPPAGSIV…EYWGPNVEPF (130 aa)). The tract at residues 945 to 1073 (RIPPAGSIVL…EYWGPNVEPF (129 aa)) is allosteric domain.

It belongs to the CarB family. Composed of two chains; the small (or glutamine) chain promotes the hydrolysis of glutamine to ammonia, which is used by the large (or ammonia) chain to synthesize carbamoyl phosphate. Tetramer of heterodimers (alpha,beta)4. Mg(2+) serves as cofactor. It depends on Mn(2+) as a cofactor.

It catalyses the reaction hydrogencarbonate + L-glutamine + 2 ATP + H2O = carbamoyl phosphate + L-glutamate + 2 ADP + phosphate + 2 H(+). The enzyme catalyses hydrogencarbonate + NH4(+) + 2 ATP = carbamoyl phosphate + 2 ADP + phosphate + 2 H(+). The protein operates within amino-acid biosynthesis; L-arginine biosynthesis; carbamoyl phosphate from bicarbonate: step 1/1. Its pathway is pyrimidine metabolism; UMP biosynthesis via de novo pathway; (S)-dihydroorotate from bicarbonate: step 1/3. Functionally, large subunit of the glutamine-dependent carbamoyl phosphate synthetase (CPSase). CPSase catalyzes the formation of carbamoyl phosphate from the ammonia moiety of glutamine, carbonate, and phosphate donated by ATP, constituting the first step of 2 biosynthetic pathways, one leading to arginine and/or urea and the other to pyrimidine nucleotides. The large subunit (synthetase) binds the substrates ammonia (free or transferred from glutamine from the small subunit), hydrogencarbonate and ATP and carries out an ATP-coupled ligase reaction, activating hydrogencarbonate by forming carboxy phosphate which reacts with ammonia to form carbamoyl phosphate. The protein is Carbamoyl phosphate synthase large chain of Hyperthermus butylicus (strain DSM 5456 / JCM 9403 / PLM1-5).